Consider the following 393-residue polypeptide: Nucleosome assembly protein 1-like 1-B (393 aa).

The span at 1–10 (MANIDNKEQT) shows a compositional bias: basic and acidic residues. The tract at residues 1–38 (MANIDNKEQTELDQQDMEDVEDVEEEETGEEANSKARQ) is disordered. The span at 11–30 (ELDQQDMEDVEDVEEEETGE) shows a compositional bias: acidic residues. The NAP1L motif signature appears at 126 to 151 (YEPTEEECEWKVDEEEDIAEDLKEKA). The short motif at 274-280 (IKKKQKH) is the Nuclear localization signal element. Over residues 347-377 (AIEDDDDDYDEEGEEADDEEGEEEADEDHDP) the composition is skewed to acidic residues. The disordered stretch occupies residues 347-393 (AIEDDDDDYDEEGEEADDEEGEEEADEDHDPDFDPKKAQNPAECKQQ).

Belongs to the nucleosome assembly protein (NAP) family. In terms of assembly, forms homomultimers. Interacts with histone b4. Interacts with the B-type cyclins ccnb1 and ccnb2. In terms of processing, phosphorylated by cyclin B-cdc2 kinase complexes.

It is found in the cytoplasm. It localises to the nucleus. Acts as a chaperone for the linker histone to facilitate deposition of histone B4 onto linker DNA. Required for both remodeling of sperm chromatin into nucleosomes, and linker histone binding to nucleosome core dimers. Plays a role in tissue-specific gene regulation. Required for primitive hemopoiesis, acting upstream of tal1/scl. The protein is Nucleosome assembly protein 1-like 1-B (nap1l1-b) of Xenopus laevis (African clawed frog).